Here is an 869-residue protein sequence, read N- to C-terminus: MAAVDLDVQSLPRGGFRCCLCHVTTANRPSLDAHLGGRKHRHLVELRATRKAQGLRSVFVSGFPRDVDSAQLTQYFQAFGPVASVVMDKDKGVFAIVEMGDVGTREAVLSQPQHTLGGHRLRVRPREQKEFQSPASKSPKGAAPDSHQLTKALAEAPDVGAQMVKLVGLRELSEAERQLRNLVVALMQEVFTEFFPGCVVHPFGSSINSFDVHGCDLDLFLDLGDLEESQPAPKAPESPSLDSALASPLDPQALACTPASPPDSQPPSPQDSEALDFETPSSSLAPQTPDSALASETLASPQSLPPASPLQEDRGEGDLGKALELAEALSGEKTEGVAMLELVGSILRGCVPGVYRVQTVPSARRPVVKFCHRPSGLHGDVSLSNRLALHNSRFLSLCSELDGRVRPLVYTLRCWAQGRGLSGSGPLLSNYALTLLVIYFLQTRDPPVLPTVSQLTQKAGEGEQVEVDGWDCSFPRDASGLEPSTNKEPLSSLLAQFFSCVSCWDLRGSLLSLREGQALPVAGDLPSNRWEGLRLGPMNLQDPFDLSHNVAANVTSRVAGRLQNSCQAAANYCRSLQYQRRSSRGRDWGLLPLLQPSSPSSLLSATPIPLPPAPFTQLTAALAQVLREALGCHIEQGTKRLRSDRGGPEESPQGGTSKRLKLDGEEKSCEEGREEQQGYIRDHSEDGVEEMVVEVGEMVQDWVQSPGRPGEPPQMLREQLATGEEGQSGHAALAEQGPKGPEAAREGSQGETGRGVSLSSVSWRCALWHRVWQGRRRARRRLQQQTKERGRGSAGTAEWLAVEAQVTRELRGLSSAAQRPEAEPLLTFVASASQVNQTLTVTPIQDSQGLFPDLHHFLQVFLPQALRNL.

The segment at 16 to 46 adopts a Matrin-type zinc-finger fold; the sequence is FRCCLCHVTTANRPSLDAHLGGRKHRHLVEL. In terms of domain architecture, RRM spans 56–128; it reads RSVFVSGFPR…HRLRVRPREQ (73 aa). Positions 111–147 are disordered; it reads QPQHTLGGHRLRVRPREQKEFQSPASKSPKGAAPDSH. S205 serves as a coordination point for ATP. Positions 216 and 218 each coordinate Mg(2+). UTP contacts are provided by D216 and D218. Residues 252 to 315 form a disordered region; sequence QALACTPASP…PASPLQEDRG (64 aa). A compositionally biased stretch (pro residues) spans 259–269; it reads ASPPDSQPPSP. Over residues 279-290 the composition is skewed to polar residues; the sequence is TPSSSLAPQTPD. An ATP-binding site is contributed by N391. Residues N391, R413, Y431, and H548 each coordinate UTP. One can recognise a PAP-associated domain in the interval 490 to 548; the sequence is LSSLLAQFFSCVSCWDLRGSLLSLREGQALPVAGDLPSNRWEGLRLGPMNLQDPFDLSH. Residues 597-869 are KA1; binds the bulging loops of U6 snRNA but is dispensable for terminal uridylyltransferase activity; that stretch reads SSPSSLLSAT…VFLPQALRNL (273 aa). Composition is skewed to basic and acidic residues over residues 637 to 648 and 660 to 686; these read GTKRLRSDRGGP and LKLD…HSED. 2 disordered regions span residues 637-686 and 720-755; these read GTKR…HSED and LATG…TGRG. S684 and S748 each carry phosphoserine.

Belongs to the DNA polymerase type-B-like family. Associates with the cleavage and polyadenylation specificity factor (CPSF) complex. Interacts with CPSF1 and CPSF3; the interaction is direct. Interacts with PIP5K1A. Mg(2+) is required as a cofactor. The cofactor is Mn(2+). Phosphorylated by CK1 in the proline-rich (Pro-rich) region.

Its subcellular location is the nucleus. It is found in the nucleolus. The protein resides in the nucleus speckle. The catalysed reaction is RNA(n) + UTP = RNA(n)-3'-uridine ribonucleotide + diphosphate. It carries out the reaction RNA(n) + ATP = RNA(n)-3'-adenine ribonucleotide + diphosphate. With respect to regulation, adenylyltransferase activity is specifically phosphatidylinositol 4,5-bisphosphate (PtdIns(4,5)P2). Poly(A) polymerase that creates the 3'-poly(A) tail of specific pre-mRNAs. Localizes to nuclear speckles together with PIP5K1A and mediates polyadenylation of a select set of mRNAs, such as HMOX1. In addition to polyadenylation, it is also required for the 3'-end cleavage of pre-mRNAs: binds to the 3'UTR of targeted pre-mRNAs and promotes the recruitment and assembly of the CPSF complex on the 3'UTR of pre-mRNAs. In addition to adenylyltransferase activity, also has uridylyltransferase activity. However, the ATP ratio is higher than UTP in cells, suggesting that it functions primarily as a poly(A) polymerase. Acts as a specific terminal uridylyltransferase for U6 snRNA in vitro: responsible for a controlled elongation reaction that results in the restoration of the four 3'-terminal UMP-residues found in newly transcribed U6 snRNA. Not involved in replication-dependent histone mRNA degradation. In Ailuropoda melanoleuca (Giant panda), this protein is Speckle targeted PIP5K1A-regulated poly(A) polymerase (TUT1).